We begin with the raw amino-acid sequence, 226 residues long: tRNA (guanine-N(7)-)-methyltransferase (226 aa).

S-adenosyl-L-methionine-binding residues include aspartate 59, glutamate 84, and aspartate 111. Residue aspartate 169 participates in substrate binding.

The protein belongs to the class I-like SAM-binding methyltransferase superfamily. TrmB family.

The catalysed reaction is guanosine(46) in tRNA + S-adenosyl-L-methionine = N(7)-methylguanosine(46) in tRNA + S-adenosyl-L-homocysteine. The protein operates within tRNA modification; N(7)-methylguanine-tRNA biosynthesis. In terms of biological role, catalyzes the formation of N(7)-methylguanine at position 46 (m7G46) in tRNA. This chain is tRNA (guanine-N(7)-)-methyltransferase, found in Chloroherpeton thalassium (strain ATCC 35110 / GB-78).